The sequence spans 547 residues: Malolactic enzyme (547 aa).

The Proton donor role is filled by tyrosine 92. Lysine 165 (proton acceptor) is an active-site residue. Position 165 (lysine 165) interacts with substrate. 3 residues coordinate Mn(2+): glutamate 236, aspartate 237, and aspartate 260. NAD(+) contacts are provided by residues 293–296, asparagine 405, and asparagine 450; that span reads AGTA. Residue asparagine 450 participates in substrate binding.

This sequence belongs to the malic enzymes family. Homodimer. Requires Mn(2+) as cofactor. It depends on NAD(+) as a cofactor.

It carries out the reaction (S)-malate + H(+) = (S)-lactate + CO2. Functionally, involved in the malolactic fermentation (MLF) of wine, which results in a natural decrease in acidity and favorable changes in wine flavors. Catalyzes the decarboxylation of L-malate to L-lactate. The chain is Malolactic enzyme from Lactiplantibacillus plantarum (strain ATCC BAA-793 / NCIMB 8826 / WCFS1) (Lactobacillus plantarum).